We begin with the raw amino-acid sequence, 892 residues long: Alanine--tRNA ligase (892 aa).

The Zn(2+) site is built by histidine 596, histidine 600, cysteine 700, and histidine 704.

It belongs to the class-II aminoacyl-tRNA synthetase family. It depends on Zn(2+) as a cofactor.

The protein resides in the cytoplasm. The enzyme catalyses tRNA(Ala) + L-alanine + ATP = L-alanyl-tRNA(Ala) + AMP + diphosphate. Its function is as follows. Catalyzes the attachment of alanine to tRNA(Ala) in a two-step reaction: alanine is first activated by ATP to form Ala-AMP and then transferred to the acceptor end of tRNA(Ala). Also edits incorrectly charged Ser-tRNA(Ala) and Gly-tRNA(Ala) via its editing domain. In Methanococcus maripaludis (strain DSM 14266 / JCM 13030 / NBRC 101832 / S2 / LL), this protein is Alanine--tRNA ligase.